Here is a 261-residue protein sequence, read N- to C-terminus: tRNA(His) guanylyltransferase (261 aa).

Positions 29, 30, and 76 each coordinate Mg(2+). GTP-binding positions include 29 to 34 (DGKGFH) and 75 to 76 (SD).

It belongs to the tRNA(His) guanylyltransferase family. Mg(2+) is required as a cofactor.

It catalyses the reaction a 5'-end ribonucleotide-tRNA(His) + GTP + ATP + H2O = a 5'-end phospho-guanosine-ribonucleotide-tRNA(His) + AMP + 2 diphosphate + H(+). Functionally, adds a GMP to the 5'-end of tRNA(His) after transcription and RNase P cleavage. The chain is tRNA(His) guanylyltransferase (thg1) from Schizosaccharomyces pombe (strain 972 / ATCC 24843) (Fission yeast).